The primary structure comprises 394 residues: Elongation factor Tu (394 aa).

Residues K10–E204 enclose the tr-type G domain. The segment at G19–T26 is G1. G19 to T26 is a GTP binding site. Position 26 (T26) interacts with Mg(2+). Positions G60–N64 are G2. A G3 region spans residues D81–G84. Residues D81 to H85 and N136 to D139 each bind GTP. Residues N136–D139 are G4. Residues S174–L176 are G5.

Belongs to the TRAFAC class translation factor GTPase superfamily. Classic translation factor GTPase family. EF-Tu/EF-1A subfamily. In terms of assembly, monomer.

Its subcellular location is the cytoplasm. The catalysed reaction is GTP + H2O = GDP + phosphate + H(+). Its function is as follows. GTP hydrolase that promotes the GTP-dependent binding of aminoacyl-tRNA to the A-site of ribosomes during protein biosynthesis. The chain is Elongation factor Tu from Ureaplasma urealyticum serovar 10 (strain ATCC 33699 / Western).